We begin with the raw amino-acid sequence, 388 residues long: Chorismate synthase (388 aa).

Arginine 39 and arginine 45 together coordinate NADP(+). FMN-binding positions include 130–132 (RSS), 251–252 (NA), glycine 296, 311–315 (KPIPT), and arginine 337.

Belongs to the chorismate synthase family. Homotetramer. FMNH2 serves as cofactor.

The enzyme catalyses 5-O-(1-carboxyvinyl)-3-phosphoshikimate = chorismate + phosphate. It functions in the pathway metabolic intermediate biosynthesis; chorismate biosynthesis; chorismate from D-erythrose 4-phosphate and phosphoenolpyruvate: step 7/7. Functionally, catalyzes the anti-1,4-elimination of the C-3 phosphate and the C-6 proR hydrogen from 5-enolpyruvylshikimate-3-phosphate (EPSP) to yield chorismate, which is the branch point compound that serves as the starting substrate for the three terminal pathways of aromatic amino acid biosynthesis. This reaction introduces a second double bond into the aromatic ring system. The sequence is that of Chorismate synthase from Streptococcus thermophilus (strain CNRZ 1066).